The following is a 1021-amino-acid chain: MKFFALFIYRPVATILLSVAITLCGILGFRMLPVAPLPQVDFPVIMVSASLPGASPETMASSVATPLERSLGRIAGVSEMTSSSSLGSTRIILQFDFDRDINGAARDVQAAINAAQSLLPSGMPSRPTYRKANPSDAPIMILTLTSDTYSQGELYDFASTQLAPTISQIDGVGDVDVGGSSLPAVRVGLTPQALFNQGVSLDDVRTAISNANVRKPQGALEDGTHRWQIQTNDELKTAAEYQPLIIHYNNGGAVRLGDVATVTDSVQDVRNAGMTNAKPAILLMIRKLPEANIIQTVDSIRAKLPELQETIPAAIDLQIAQDRSPTIRASLEEVEQTLIISVALVILVVFLFLRSGRATIIPAVAVPVSLIGTFAAMYLCGFSLNNLSLMALTIATGFVVDDAIVVLENIARHLEAGMKPLQAALQGTREVGFTVLSMSLSLVAVFLPLLLMGGLPGRLLREFAVTLSVAIGISLLVSLTLTPMMCGWMLKASKPREQKRLRGFGRMLVALQQGYGKSLKWVLNHTRLVGVVLLGTIALNISIPKTFFPEQDTGVLMGGIQADQSISFQAMRGKLQDFMKIIRDDPAVDNVTGFTGGSRVSSGMMFITLKPRDERSETAQQIIDRLRVKLAKEPGANLFLMAVQDIRVGGRQSNASYQYTLLSDDLAALREWEPKIRKKLATLPELADVNSDQQDNGAEMNLVYDRDTMARLGIDVQAANSLLNNAFGQRQISTIYQPMNQYKVVMEVDPRYTQDISALEKMFVINNEGKAIPLSYFAKWQPANAPLSVNHQGLSAASTISFNLPTGKSLSDASAAIDRAMTQLGVPSTVRGSFAGTAQVFQETMNSQVILIIAAIATVYIVLGILYESYVHPLTILSTLPSAGVGALLALELFNAPFSLIALIGIMLLIGIVKKNAIMMVDFALEAQRHGNLTPQEAIFQACLLRFRPIMMTTLAALFGALPLVLSGGDGSELRQPLEITIVGGLVMSQLLTLYTTPVVYLFFDRLRLRFSRKPKQTVTE.

The Cytoplasmic segment spans residues 1–6; that stretch reads MKFFAL. A helical membrane pass occupies residues 7-29; the sequence is FIYRPVATILLSVAITLCGILGF. Residues 30 to 335 are Periplasmic-facing; it reads RMLPVAPLPQ…TIRASLEEVE (306 aa). Residues 336–353 traverse the membrane as a helical segment; sequence QTLIISVALVILVVFLFL. The Cytoplasmic segment spans residues 354-359; it reads RSGRAT. A helical transmembrane segment spans residues 360 to 379; that stretch reads IIPAVAVPVSLIGTFAAMYL. Residues 380-388 are Periplasmic-facing; it reads CGFSLNNLS. The helical transmembrane segment at 389–411 threads the bilayer; sequence LMALTIATGFVVDDAIVVLENIA. Over 412-430 the chain is Cytoplasmic; that stretch reads RHLEAGMKPLQAALQGTRE. Residues 431 to 453 form a helical membrane-spanning segment; the sequence is VGFTVLSMSLSLVAVFLPLLLMG. The Periplasmic portion of the chain corresponds to 454–467; it reads GLPGRLLREFAVTL. Residues 468-490 form a helical membrane-spanning segment; that stretch reads SVAIGISLLVSLTLTPMMCGWML. Residues 491-848 are Cytoplasmic-facing; that stretch reads KASKPREQKR…QVFQETMNSQ (358 aa). The helical transmembrane segment at 849-871 threads the bilayer; sequence VILIIAAIATVYIVLGILYESYV. The Periplasmic portion of the chain corresponds to 872–890; sequence HPLTILSTLPSAGVGALLA. Residues 891-913 form a helical membrane-spanning segment; the sequence is LELFNAPFSLIALIGIMLLIGIV. The Cytoplasmic segment spans residues 914 to 943; the sequence is KKNAIMMVDFALEAQRHGNLTPQEAIFQAC. The chain crosses the membrane as a helical span at residues 944–966; it reads LLRFRPIMMTTLAALFGALPLVL. The Periplasmic segment spans residues 967-980; sequence SGGDGSELRQPLEI. Residues 981–1003 traverse the membrane as a helical segment; it reads TIVGGLVMSQLLTLYTTPVVYLF. The Cytoplasmic segment spans residues 1004–1021; it reads FDRLRLRFSRKPKQTVTE.

The protein belongs to the resistance-nodulation-cell division (RND) (TC 2.A.6) family. MdtC subfamily. Part of a tripartite efflux system composed of MdtA, MdtB and MdtC. MdtC forms a heteromultimer with MdtB.

It localises to the cell inner membrane. This Shigella flexneri protein is Multidrug resistance protein MdtC.